The chain runs to 276 residues: NH(3)-dependent NAD(+) synthetase (276 aa).

43–50 (GISGGVDS) contacts ATP. Asp49 lines the Mg(2+) pocket. Residue Arg146 participates in deamido-NAD(+) binding. Residue Thr166 coordinates ATP. A Mg(2+)-binding site is contributed by Glu171. Deamido-NAD(+) is bound by residues Lys179 and Asp186. 2 residues coordinate ATP: Lys195 and Thr217. 266–267 (HK) is a deamido-NAD(+) binding site.

The protein belongs to the NAD synthetase family. In terms of assembly, homodimer.

The enzyme catalyses deamido-NAD(+) + NH4(+) + ATP = AMP + diphosphate + NAD(+) + H(+). It functions in the pathway cofactor biosynthesis; NAD(+) biosynthesis; NAD(+) from deamido-NAD(+) (ammonia route): step 1/1. In terms of biological role, catalyzes the ATP-dependent amidation of deamido-NAD to form NAD. Uses ammonia as a nitrogen source. This chain is NH(3)-dependent NAD(+) synthetase, found in Shewanella putrefaciens (strain CN-32 / ATCC BAA-453).